Here is a 335-residue protein sequence, read N- to C-terminus: UPF0353 protein NFA_34780 (335 aa).

2 consecutive transmembrane segments (helical) span residues 8-28 and 61-81; these read ALIWLGFLAVVALIALGYVLV and IALMLVGLVFLTIAAAGPTSV. The region spanning 90 to 295 is the VWFA domain; it reads TVVLVMDVSL…EELTAVYDTL (206 aa). Residues 310 to 330 traverse the membrane as a helical segment; it reads RPWLLLGMLVVAAGIVTGLLY.

Belongs to the UPF0353 family.

The protein localises to the cell membrane. The protein is UPF0353 protein NFA_34780 of Nocardia farcinica (strain IFM 10152).